The sequence spans 478 residues: Protein adenylyltransferase VbhT (478 aa).

A Fido domain is found at 55–200; sequence FDLDHMKKIH…RRNLTEFTVN (146 aa). Residues 85 to 88, 133 to 136, 140 to 147, and Ser175 each bind ATP; these read KDNS, NALH, and EGNGRTLR.

In terms of assembly, homodimer. Interacts with VbhA.

The enzyme catalyses L-tyrosyl-[protein] + ATP = O-(5'-adenylyl)-L-tyrosyl-[protein] + diphosphate. It carries out the reaction L-threonyl-[protein] + ATP = 3-O-(5'-adenylyl)-L-threonyl-[protein] + diphosphate. Adenylyltransferase activity is inhibited by antitoxin VbhA; which acts by competing with ATP-binding at Arg-147 and prevents productive ATP-binding. Its function is as follows. Toxic component of type II toxin-antitoxin (TA) system VbhT-VbhA. Adenylyltransferase involved in virulence by mediating the addition of adenosine 5'-monophosphate (AMP) to specific residue of host GTPases. The resulting AMPylation affects GTPases, impairing actin assembly in infected cells. This Bartonella schoenbuchensis (strain DSM 13525 / NCTC 13165 / R1) protein is Protein adenylyltransferase VbhT (vbhT).